A 568-amino-acid chain; its full sequence is Natural resistance-associated macrophage protein 2 (568 aa).

Residues 1-40 (MVLGPEQKMSDDSVSGDHGESASLGNINPAYSNPSLSQSP) are disordered. Topologically, residues 1–69 (MVLGPEQKMS…EEYSCFSFRK (69 aa)) are cytoplasmic. Positions 8–20 (KMSDDSVSGDHGE) are enriched in basic and acidic residues. Residues 23–40 (SLGNINPAYSNPSLSQSP) are compositionally biased toward polar residues. The helical transmembrane segment at 70–90 (LWAFTGPGFLMSIAYLDPGNI) threads the bilayer. Topologically, residues 91–96 (ESDLQS) are extracellular. A helical membrane pass occupies residues 97–117 (GAVAGFKLLWILLLATLVGLL). Residues 118 to 154 (LQRLAARLGVVTGLHLAEVCHRQYPKVPRVILWLMVE) are Cytoplasmic-facing. A helical membrane pass occupies residues 155–175 (LAIIGSDMQEVIGSAIAINLL). Topologically, residues 176–179 (SVGR) are extracellular. Residues 180-200 (IPLWGGVLITIADTFVFLFLD) form a helical membrane-spanning segment. The Cytoplasmic portion of the chain corresponds to 201 to 208 (KYGLRKLE). Residues 209 to 229 (AFFGFLITIMALTFGYEYVTV) form a helical membrane-spanning segment. The Extracellular segment spans residues 230-255 (KPSQSQVLKGMFVPSCSGCRTPQIEQ). A helical membrane pass occupies residues 256 to 276 (AVGIVGAVIMPHNMYLHSALV). At 277-301 (KSRQVNRNNKQEVREANKYFFIESC) the chain is on the cytoplasmic side. A helical transmembrane segment spans residues 302–322 (IALFVSFIINVFVVSVFAEAF). The Extracellular segment spans residues 323–360 (FGKTNEQVVEVCTNTSSPHAGLFPKDNSTLAVDIYKGG). 2 N-linked (GlcNAc...) asparagine glycosylation sites follow: Asn-336 and Asn-349. Residues 361–381 (VVLGCYFGPAALYIWAVGILA) traverse the membrane as a helical segment. Topologically, residues 382-408 (AGQSSTMTGTYSGQFVMEGFLNLKWSR) are cytoplasmic. The chain crosses the membrane as a helical span at residues 409–429 (FARVVLTRSIAIIPTLLVAVF). Residues 430-440 (QDVEHLTGMND) are Extracellular-facing. A helical transmembrane segment spans residues 441–461 (FLNVLQSLQLPFALIPILTFT). The Cytoplasmic portion of the chain corresponds to 462 to 482 (SLRPVMSDFANGLGWRIAGGI). The chain crosses the membrane as a helical span at residues 483-503 (LVLIICSINMYFVVVYVRDLG). Residues 504–506 (HVA) lie on the Extracellular side of the membrane. The helical transmembrane segment at 507–527 (LYVVAAVVSVAYLGFVFYLGW) threads the bilayer. The Cytoplasmic segment spans residues 528 to 568 (QCLIALGMSFLDCGHTCHLGLTAQPELYLLNTMDADSLVSR). A required for early endosome targeting region spans residues 555–559 (YLLNT). 2 positions are modified to phosphoserine: Ser-564 and Ser-567.

It belongs to the NRAMP family. As to quaternary structure, forms a complex with NDFIP1 and NEDD4L, in cortical neurons, in response to iron and cobalt exposure; this interaction leads to SLC11A2 ubiquitination by NEDD4L and proteasome-dependent degradation. Interacts with NDFIP1, NDFIP2 and WWP2; this interaction leads to SLC11A2 ubiquitination by WWP2 and subsequent proteasome-dependent degradation. Interacts with COX2 and TOM6 at the outer mitochondrion membrane. Interacts with ARRDC1; this interaction regulates the incorporation of SLC11A2 into extracellular vesicles through an ubiquitination-dependent mechanism. Interacts with ARRDC4; controls the incorporation of SLC11A2 into extracellular vesicles through an ubiquitination-dependent mechanism. In terms of processing, ubiquitinated by WWP2. N-glycosylated. Ubiquitously expressed. Expressed in erythroid progenitors.

The protein resides in the early endosome membrane. Its subcellular location is the apical cell membrane. The protein localises to the late endosome membrane. It localises to the lysosome membrane. It is found in the cell membrane. The protein resides in the extracellular vesicle membrane. Its subcellular location is the mitochondrion outer membrane. The protein localises to the golgi apparatus. It localises to the trans-Golgi network membrane. It is found in the recycling endosome membrane. It catalyses the reaction Fe(2+)(in) + H(+)(in) = Fe(2+)(out) + H(+)(out). The catalysed reaction is Co(2+)(out) + H(+)(out) = Co(2+)(in) + H(+)(in). The enzyme catalyses Cd(2+)(out) + H(+)(out) = Cd(2+)(in) + H(+)(in). It carries out the reaction Mn(2+)(in) + H(+)(in) = Mn(2+)(out) + H(+)(out). It catalyses the reaction Zn(2+)(out) + H(+)(out) = Zn(2+)(in) + H(+)(in). The catalysed reaction is Ni(2+)(out) + H(+)(out) = Ni(2+)(in) + H(+)(in). The enzyme catalyses H(+)(in) = H(+)(out). It carries out the reaction Fe(2+)(in) = Fe(2+)(out). Functionally, proton-coupled metal ion symporter operating with a proton to metal ion stoichiometry of 1:1. Selectively transports various divalent metal cations, in decreasing affinity: Cd(2+) &gt; Fe(2+) &gt; Co(2+), Mn(2+) &gt;&gt; Zn(2+), Ni(2+), VO(2+). Essential for maintenance of iron homeostasis by modulating intestinal absorption of dietary Fe(2+) and TF-associated endosomal Fe(2+) transport in erythroid precursors and other cells. Enables Fe(2+) and Mn(2+) ion entry into mitochondria, and is thus expected to promote mitochondrial heme synthesis, iron-sulfur cluster biogenesis and antioxidant defense. Can mediate uncoupled fluxes of either protons or metal ions. The protein is Natural resistance-associated macrophage protein 2 (SLC11A2) of Homo sapiens (Human).